Here is an 84-residue protein sequence, read N- to C-terminus: Beta-mammal toxin Cn2 (84 aa).

The first 16 residues, 1–16 (LLIITACLALIGTVWA), serve as a signal peptide directing secretion. The LCN-type CS-alpha/beta domain occupies 17–82 (KEGYLVDKNT…VWPLPNKRCS (66 aa)). 4 cysteine pairs are disulfide-bonded: Cys28–Cys81, Cys32–Cys57, Cys41–Cys62, and Cys45–Cys64. Ser82 bears the Serine amide mark.

It belongs to the long (4 C-C) scorpion toxin superfamily. Sodium channel inhibitor family. Beta subfamily. As to expression, expressed by the venom gland.

The protein localises to the secreted. Mammal beta-toxins bind voltage-independently at site-4 of sodium channels (Nav) and shift the activation voltage to more negative potentials. This toxin is active against mammals. The protein is Beta-mammal toxin Cn2 of Centruroides noxius (Mexican scorpion).